Reading from the N-terminus, the 250-residue chain is 2,3-bisphosphoglycerate-dependent phosphoglycerate mutase (250 aa).

Residues R10–N17, T23–G24, R62, E89–Y92, K100, R116–R117, and G185–N186 each bind substrate. Catalysis depends on H11, which acts as the Tele-phosphohistidine intermediate. E89 functions as the Proton donor/acceptor in the catalytic mechanism.

Belongs to the phosphoglycerate mutase family. BPG-dependent PGAM subfamily. Homodimer.

The catalysed reaction is (2R)-2-phosphoglycerate = (2R)-3-phosphoglycerate. The protein operates within carbohydrate degradation; glycolysis; pyruvate from D-glyceraldehyde 3-phosphate: step 3/5. Functionally, catalyzes the interconversion of 2-phosphoglycerate and 3-phosphoglycerate. The sequence is that of 2,3-bisphosphoglycerate-dependent phosphoglycerate mutase from Serratia proteamaculans (strain 568).